We begin with the raw amino-acid sequence, 259 residues long: Small ribosomal subunit protein uS7m (259 aa).

The N-terminal 39 residues, 1-39 (MLRLIKQPLFRCASSGHLMKESLVFIHQTRTFQVGKFTS), are a transit peptide targeting the mitochondrion. Threonine 157 carries the phosphothreonine modification.

It belongs to the universal ribosomal protein uS7 family. As to quaternary structure, component of the mitochondrial small ribosomal subunit (mt-SSU). Mature yeast 74S mitochondrial ribosomes consist of a small (37S) and a large (54S) subunit. The 37S small subunit contains a 15S ribosomal RNA (15S mt-rRNA) and at least 32 different proteins. The 54S large subunit contains a 21S rRNA (21S mt-rRNA) and at least 45 different proteins.

The protein resides in the mitochondrion. Functionally, component of the mitochondrial ribosome (mitoribosome), a dedicated translation machinery responsible for the synthesis of mitochondrial genome-encoded proteins, including at least some of the essential transmembrane subunits of the mitochondrial respiratory chain. The mitoribosomes are attached to the mitochondrial inner membrane and translation products are cotranslationally integrated into the membrane. The protein is Small ribosomal subunit protein uS7m (rsm7) of Schizosaccharomyces pombe (strain 972 / ATCC 24843) (Fission yeast).